The sequence spans 733 residues: ATP-dependent RNA helicase DBP7 (733 aa).

2 disordered regions span residues 1–92 (MDED…SKMI) and 119–139 (SSQL…SNAP). Positions 17–30 (SVSSGSNKRTTSKV) are enriched in polar residues. Positions 52–80 (QKKDRSATGKDDGKKHENDESNDSKKRPT) are enriched in basic and acidic residues. Residues 144–173 (STFEGLGINERLSKHLTETLRFKNPTKVQK) carry the Q motif motif. The region spanning 177–372 (PTMLSTERDL…SIILNNPEMI (196 aa)) is the Helicase ATP-binding domain. 190 to 197 (AQTGSGKT) contacts ATP. Positions 304–307 (DEGD) match the DEAD box motif. Residues 406 to 596 (TLSAILKKIS…NYENYLKDGF (191 aa)) form the Helicase C-terminal domain. The interval 687–714 (KKLGKSVESNSGIQGASKKTKKEDPRKK) is disordered.

The protein belongs to the DEAD box helicase family. DDX31/DBP7 subfamily.

Its subcellular location is the nucleus. It localises to the nucleolus. The catalysed reaction is ATP + H2O = ADP + phosphate + H(+). Functionally, ATP-binding RNA helicase involved in the biogenesis of 60S ribosomal subunits and is required for the normal formation of 25S and 5.8S rRNAs. In Scheffersomyces stipitis (strain ATCC 58785 / CBS 6054 / NBRC 10063 / NRRL Y-11545) (Yeast), this protein is ATP-dependent RNA helicase DBP7 (DPB7).